The following is a 62-amino-acid chain: Conotoxin reg3.5 (62 aa).

The N-terminal stretch at 1–22 is a signal peptide; that stretch reads MMFKLGVLLTICLLLFPLTGTA. The propeptide occupies 23–49; it reads LDGDQLAEHMLDISSGINDRWFDPVRK. Intrachain disulfides connect C50–C60, C51–C58, and C56–C61.

The protein belongs to the conotoxin M superfamily. In terms of tissue distribution, expressed by the venom duct.

Its subcellular location is the secreted. The sequence is that of Conotoxin reg3.5 from Conus regius (Crown cone).